We begin with the raw amino-acid sequence, 794 residues long: Zinc finger protein 148 (794 aa).

Lysine 6 is covalently cross-linked (Glycyl lysine isopeptide (Lys-Gly) (interchain with G-Cter in SUMO2)). Residue serine 51 is modified to Phosphoserine. Glycyl lysine isopeptide (Lys-Gly) (interchain with G-Cter in SUMO2) cross-links involve residues lysine 88, lysine 115, and lysine 132. A C2H2-type 1 zinc finger spans residues 171–193 (HVCEHCNAAFRTNYHLQRHVFIH). Phosphothreonine is present on threonine 194. 2 C2H2-type zinc fingers span residues 199–221 (FQCSQCDMRFIQKYLLQRHEKIH) and 227–249 (FRCDECGMRFIQKYHMERHKRTH). Serine 250 is subject to Phosphoserine. The C2H2-type 4 zinc-finger motif lies at 255-278 (YQCEYCLQYFSRTDRVLKHKRMCH). A Glycyl lysine isopeptide (Lys-Gly) (interchain with G-Cter in SUMO2) cross-link involves residue lysine 291. Positions 298–336 (EEDSGFSTSPKDNSLPKKKRQKTEKKSSGMDKESALDKS) are disordered. A phosphoserine mark is found at serine 301 and serine 306. Lysine 308 participates in a covalent cross-link: Glycyl lysine isopeptide (Lys-Gly) (interchain with G-Cter in SUMO2). The span at 321-336 (EKKSSGMDKESALDKS) shows a compositional bias: basic and acidic residues. Lysine 356 is covalently cross-linked (Glycyl lysine isopeptide (Lys-Gly) (interchain with G-Cter in SUMO1); alternate). Lysine 356 participates in a covalent cross-link: Glycyl lysine isopeptide (Lys-Gly) (interchain with G-Cter in SUMO2); alternate. Lysine 402 is covalently cross-linked (Glycyl lysine isopeptide (Lys-Gly) (interchain with G-Cter in SUMO2)). Serine 412 is modified (phosphoserine). Residues lysine 421 and lysine 424 each participate in a glycyl lysine isopeptide (Lys-Gly) (interchain with G-Cter in SUMO2) cross-link. Positions 574–588 (NSSEVPEVTPSENVG) are enriched in polar residues. A disordered region spans residues 574–596 (NSSEVPEVTPSENVGSSSQASSS). At lysine 607 the chain carries N6-acetyllysine. Phosphoserine is present on residues serine 665 and serine 784.

This sequence belongs to the krueppel C2H2-type zinc-finger protein family. Interacts with HNRNPDL. Interacts with the 5FMC complex; the interaction requires association with CHTOP. Interacts with CAVIN1. Post-translationally, sumoylated with SUMO2. Desumoylated by SENP3, resulting in the stimulation of transcription of its target genes.

Its subcellular location is the nucleus. Its function is as follows. Involved in transcriptional regulation. Represses the transcription of a number of genes including gastrin, stromelysin and enolase. Binds to the G-rich box in the enhancer region of these genes. In Homo sapiens (Human), this protein is Zinc finger protein 148 (ZNF148).